Here is a 390-residue protein sequence, read N- to C-terminus: Flap endonuclease 1-1 (390 aa).

The tract at residues Met-1–Lys-108 is N-domain. Mg(2+) is bound at residue Asp-34. Arg-74 contributes to the DNA binding site. Positions 90, 162, 164, 183, and 185 each coordinate Mg(2+). Residues Gln-126–Phe-254 form an I-domain region. Glu-162 is a DNA binding site. DNA contacts are provided by Gly-232 and Asp-234. Residue Asp-234 coordinates Mg(2+). Positions Phe-348 to Phe-356 are interaction with PCNA. The tract at residues Thr-359–Ile-390 is disordered.

The protein belongs to the XPG/RAD2 endonuclease family. FEN1 subfamily. As to quaternary structure, interacts with PCNA. Three molecules of FEN1 bind to one PCNA trimer with each molecule binding to one PCNA monomer. PCNA stimulates the nuclease activity without altering cleavage specificity. The cofactor is Mg(2+). Post-translationally, phosphorylated. Phosphorylation upon DNA damage induces relocalization to the nuclear plasma.

The protein localises to the nucleus. Its subcellular location is the nucleolus. It is found in the nucleoplasm. The protein resides in the mitochondrion. Functionally, structure-specific nuclease with 5'-flap endonuclease and 5'-3' exonuclease activities involved in DNA replication and repair. During DNA replication, cleaves the 5'-overhanging flap structure that is generated by displacement synthesis when DNA polymerase encounters the 5'-end of a downstream Okazaki fragment. It enters the flap from the 5'-end and then tracks to cleave the flap base, leaving a nick for ligation. Also involved in the long patch base excision repair (LP-BER) pathway, by cleaving within the apurinic/apyrimidinic (AP) site-terminated flap. Acts as a genome stabilization factor that prevents flaps from equilibrating into structures that lead to duplications and deletions. Also possesses 5'-3' exonuclease activity on nicked or gapped double-stranded DNA, and exhibits RNase H activity. Also involved in replication and repair of rDNA and in repairing mitochondrial DNA. The polypeptide is Flap endonuclease 1-1 (Paramecium tetraurelia).